Here is a 343-residue protein sequence, read N- to C-terminus: UBP1-associated proteins 1A (343 aa).

The segment at 1 to 61 (MAKTLDKSKK…SESDNEFDPE (61 aa)) is disordered. Low complexity predominate over residues 28–49 (NKQQQQPESSTPYSSSSSSSDS). The segment covering 50–61 (SDSESDNEFDPE) has biased composition (acidic residues). An RRM domain is found at 104-181 (RKIFVYGLPW…RTATCQLASM (78 aa)). Residues 312 to 343 (STYPDSDAGGKRGTGKDSDAGGSSFHGYSNYS) form a disordered region. The span at 319 to 330 (AGGKRGTGKDSD) shows a compositional bias: basic and acidic residues.

Interacts with UBA1A, UBA2A, UBP1A, UBP1B and UBP1C.

Its subcellular location is the nucleus. Functionally, acts as a component of a complex regulating the turnover of mRNAs in the nucleus. Binds with high affinity to RNA molecules that contain U-rich sequences in 3'-UTRs. May function in complex with UBP1 and contribute to the stabilization of mRNAs in the nucleus. However, unlike UBP1, UBA1A does not stimulate pre-mRNA splicing. This is UBP1-associated proteins 1A (UBA1A) from Arabidopsis thaliana (Mouse-ear cress).